The sequence spans 348 residues: Holliday junction branch migration complex subunit RuvB (348 aa).

Positions 4 to 184 are large ATPase domain (RuvB-L); it reads ADRLIAASGR…FGIVQRLEFY (181 aa). ATP-binding positions include I23, R24, G65, K68, T69, T70, 131–133, R174, Y184, and R221; that span reads EDF. Mg(2+) is bound at residue T69. The tract at residues 185–255 is small ATPAse domain (RuvB-S); it reads NDKDLSTIVS…VADMALNLLD (71 aa). The head domain (RuvB-H) stretch occupies residues 258 to 348; the sequence is ERGFDHSDRR…GGDFSEPGDE (91 aa). R294, R313, and R318 together coordinate DNA.

The protein belongs to the RuvB family. As to quaternary structure, homohexamer. Forms an RuvA(8)-RuvB(12)-Holliday junction (HJ) complex. HJ DNA is sandwiched between 2 RuvA tetramers; dsDNA enters through RuvA and exits via RuvB. An RuvB hexamer assembles on each DNA strand where it exits the tetramer. Each RuvB hexamer is contacted by two RuvA subunits (via domain III) on 2 adjacent RuvB subunits; this complex drives branch migration. In the full resolvosome a probable DNA-RuvA(4)-RuvB(12)-RuvC(2) complex forms which resolves the HJ.

It localises to the cytoplasm. The catalysed reaction is ATP + H2O = ADP + phosphate + H(+). The RuvA-RuvB-RuvC complex processes Holliday junction (HJ) DNA during genetic recombination and DNA repair, while the RuvA-RuvB complex plays an important role in the rescue of blocked DNA replication forks via replication fork reversal (RFR). RuvA specifically binds to HJ cruciform DNA, conferring on it an open structure. The RuvB hexamer acts as an ATP-dependent pump, pulling dsDNA into and through the RuvAB complex. RuvB forms 2 homohexamers on either side of HJ DNA bound by 1 or 2 RuvA tetramers; 4 subunits per hexamer contact DNA at a time. Coordinated motions by a converter formed by DNA-disengaged RuvB subunits stimulates ATP hydrolysis and nucleotide exchange. Immobilization of the converter enables RuvB to convert the ATP-contained energy into a lever motion, pulling 2 nucleotides of DNA out of the RuvA tetramer per ATP hydrolyzed, thus driving DNA branch migration. The RuvB motors rotate together with the DNA substrate, which together with the progressing nucleotide cycle form the mechanistic basis for DNA recombination by continuous HJ branch migration. Branch migration allows RuvC to scan DNA until it finds its consensus sequence, where it cleaves and resolves cruciform DNA. This Pseudomonas putida (strain ATCC 47054 / DSM 6125 / CFBP 8728 / NCIMB 11950 / KT2440) protein is Holliday junction branch migration complex subunit RuvB.